A 500-amino-acid chain; its full sequence is GTPase Der (500 aa).

EngA-type G domains are found at residues 3–166 and 211–384; these read PVVA…MEEL and IKLA…VSAT. Residues 9 to 16, 56 to 60, 118 to 121, 217 to 224, 264 to 268, and 329 to 332 contribute to the GTP site; these read GRPNVGKS, DTGGI, NKID, DTAGV, and NKWD. Residues 385 to 469 enclose the KH-like domain; the sequence is KRVGTSVLTR…PIRIQFQNSE (85 aa). The disordered stretch occupies residues 468–500; sequence SENPFEDRGGKLTMSQERQRKRLLGAVKNRNKK. Residues 486–500 show a composition bias toward basic residues; it reads QRKRLLGAVKNRNKK.

The protein belongs to the TRAFAC class TrmE-Era-EngA-EngB-Septin-like GTPase superfamily. EngA (Der) GTPase family. Associates with the 50S ribosomal subunit.

Functionally, GTPase that plays an essential role in the late steps of ribosome biogenesis. The protein is GTPase Der of Aliivibrio fischeri (strain ATCC 700601 / ES114) (Vibrio fischeri).